Reading from the N-terminus, the 128-residue chain is Small ribosomal subunit protein uS9 (128 aa).

Belongs to the universal ribosomal protein uS9 family. Part of the 30S ribosomal subunit. Contacts proteins S7 and S10.

In terms of biological role, part of the top of the head of the 30S subunit. The C-terminal region penetrates the head emerging in the P-site where it contacts tRNA. This chain is Small ribosomal subunit protein uS9 (rpsI), found in Thermus thermophilus (strain ATCC BAA-163 / DSM 7039 / HB27).